A 297-amino-acid chain; its full sequence is 4-hydroxy-tetrahydrodipicolinate synthase (297 aa).

Residue T45 coordinates pyruvate. The active-site Proton donor/acceptor is the Y133. The Schiff-base intermediate with substrate role is filled by K161. I205 provides a ligand contact to pyruvate.

The protein belongs to the DapA family. In terms of assembly, homotetramer; dimer of dimers.

The protein resides in the cytoplasm. It carries out the reaction L-aspartate 4-semialdehyde + pyruvate = (2S,4S)-4-hydroxy-2,3,4,5-tetrahydrodipicolinate + H2O + H(+). It functions in the pathway amino-acid biosynthesis; L-lysine biosynthesis via DAP pathway; (S)-tetrahydrodipicolinate from L-aspartate: step 3/4. Catalyzes the condensation of (S)-aspartate-beta-semialdehyde [(S)-ASA] and pyruvate to 4-hydroxy-tetrahydrodipicolinate (HTPA). The sequence is that of 4-hydroxy-tetrahydrodipicolinate synthase from Dichelobacter nodosus (strain VCS1703A).